Consider the following 110-residue polypeptide: Tumor suppressor candidate 2 (110 aa).

The N-myristoyl glycine moiety is linked to residue Gly2. Position 50 is a phosphoserine (Ser50).

This sequence belongs to the TUSC2 family. Post-translationally, myristoylation is required for tumor suppressor activity. In terms of tissue distribution, strong expression in heart, lung, skeletal muscle, kidney, and pancreas, followed by brain and liver, lowest levels in placenta.

Functionally, may function as a tumor suppressor, inhibiting colony formation, causing G1 arrest and ultimately inducing apoptosis in homozygous 3p21.3 120-kb region-deficient cells. The chain is Tumor suppressor candidate 2 (TUSC2) from Homo sapiens (Human).